A 371-amino-acid polypeptide reads, in one-letter code: Fe(3+) ions import ATP-binding protein FbpC (371 aa).

Positions 5–235 (IKIENAQKRY…PANLFVATFI (231 aa)) constitute an ABC transporter domain. 37–44 (GPSGCGKT) serves as a coordination point for ATP.

It belongs to the ABC transporter superfamily. Fe(3+) ion importer (TC 3.A.1.10) family. In terms of assembly, the complex is composed of two ATP-binding proteins (FbpC), two transmembrane proteins (FbpB) and a solute-binding protein (FbpA).

The protein resides in the cell inner membrane. It catalyses the reaction Fe(3+)(out) + ATP + H2O = Fe(3+)(in) + ADP + phosphate + H(+). Part of the ABC transporter complex FbpABC involved in Fe(3+) ions import. Responsible for energy coupling to the transport system. The protein is Fe(3+) ions import ATP-binding protein FbpC of Fusobacterium nucleatum subsp. nucleatum (strain ATCC 25586 / DSM 15643 / BCRC 10681 / CIP 101130 / JCM 8532 / KCTC 2640 / LMG 13131 / VPI 4355).